The following is a 270-amino-acid chain: Tetracenomycin polyketide synthesis O-methyltransferase TcmP (270 aa).

Its pathway is antibiotic biosynthesis; tetracenomycin C biosynthesis. Its function is as follows. O-methyltransferase that catalyzes the methylation of the C-9 carboxy group of tetracenomycin E (TCM E) to yield TCM A2. Catalyzes as well the following side reactions: methylation of 8-O-methyl-TCM D3 to 9-carboxymethyl-8-O-methyl-TCM D3; and of TCM B3 to 9-carboxymethyl-TCM B3. This Streptomyces glaucescens protein is Tetracenomycin polyketide synthesis O-methyltransferase TcmP (tcmP).